Consider the following 360-residue polypeptide: Peptide chain release factor 1 (360 aa).

Residue Q235 is modified to N5-methylglutamine. Basic and acidic residues predominate over residues 281–307 (ERQRADSERSADRRNQVGSGDRSERIR). Residues 281–310 (ERQRADSERSADRRNQVGSGDRSERIRTYN) are disordered.

Belongs to the prokaryotic/mitochondrial release factor family. Methylated by PrmC. Methylation increases the termination efficiency of RF1.

Its subcellular location is the cytoplasm. In terms of biological role, peptide chain release factor 1 directs the termination of translation in response to the peptide chain termination codons UAG and UAA. This Sinorhizobium medicae (strain WSM419) (Ensifer medicae) protein is Peptide chain release factor 1.